We begin with the raw amino-acid sequence, 283 residues long: Protein FAM170A (283 aa).

Disordered stretches follow at residues 1–54 and 123–171; these read MKRR…RSQH and GTPP…AKTP. Polar residues predominate over residues 127 to 138; the sequence is SDVSTRNLLSDS. Over residues 142–153 the composition is skewed to basic and acidic residues; it reads GEEKEHEERTES. Threonine 170 carries the phosphothreonine modification. The C2H2-type; degenerate zinc finger occupies 181 to 205; that stretch reads FRCMACCRVFTTMEALQEHVQFGIR. A disordered region spans residues 223 to 283; that stretch reads NMESESTQDE…VFHSPKDRNS (61 aa). The span at 228–246 shows a compositional bias: acidic residues; that stretch reads STQDEQEEENGNEKEEEEK. A Phosphoserine modification is found at serine 268.

This sequence belongs to the FAM170 family.

The protein localises to the nucleus. Its function is as follows. Acts as a nuclear transcription factor that positively regulates the expression of heat shock genes. Binds to heat shock promoter elements (HSE). This chain is Protein FAM170A (FAM170A), found in Macaca fascicularis (Crab-eating macaque).